Reading from the N-terminus, the 573-residue chain is Phosphoenolpyruvate-protein phosphotransferase (573 aa).

The active-site Tele-phosphohistidine intermediate is H190. The phosphoenolpyruvate site is built by R297 and R334. Mg(2+)-binding residues include E433 and D457. Phosphoenolpyruvate is bound by residues 456–457 (ND) and R467. C504 (proton donor) is an active-site residue.

The protein belongs to the PEP-utilizing enzyme family. Homodimer. Mg(2+) serves as cofactor.

The protein resides in the cytoplasm. It catalyses the reaction L-histidyl-[protein] + phosphoenolpyruvate = N(pros)-phospho-L-histidyl-[protein] + pyruvate. General (non sugar-specific) component of the phosphoenolpyruvate-dependent sugar phosphotransferase system (sugar PTS). This major carbohydrate active-transport system catalyzes the phosphorylation of incoming sugar substrates concomitantly with their translocation across the cell membrane. Enzyme I transfers the phosphoryl group from phosphoenolpyruvate (PEP) to the phosphoryl carrier protein (HPr). The chain is Phosphoenolpyruvate-protein phosphotransferase (ptsI) from Borreliella burgdorferi (strain ATCC 35210 / DSM 4680 / CIP 102532 / B31) (Borrelia burgdorferi).